A 72-amino-acid chain; its full sequence is Translation initiation factor IF-1 (72 aa).

Residues 1–72 (MSKEDVIEVE…TRGRITWRKK (72 aa)) form the S1-like domain.

It belongs to the IF-1 family. Component of the 30S ribosomal translation pre-initiation complex which assembles on the 30S ribosome in the order IF-2 and IF-3, IF-1 and N-formylmethionyl-tRNA(fMet); mRNA recruitment can occur at any time during PIC assembly.

The protein localises to the cytoplasm. In terms of biological role, one of the essential components for the initiation of protein synthesis. Stabilizes the binding of IF-2 and IF-3 on the 30S subunit to which N-formylmethionyl-tRNA(fMet) subsequently binds. Helps modulate mRNA selection, yielding the 30S pre-initiation complex (PIC). Upon addition of the 50S ribosomal subunit IF-1, IF-2 and IF-3 are released leaving the mature 70S translation initiation complex. The chain is Translation initiation factor IF-1 from Alkaliphilus metalliredigens (strain QYMF).